The sequence spans 217 residues: Uridylate kinase (217 aa).

Residue 6-10 (KLSGR) coordinates ATP. Residue Gly-38 participates in UMP binding. ATP contacts are provided by Gly-39 and Arg-43. UMP is bound by residues Asp-60 and 107-113 (FQPGQST). 3 residues coordinate ATP: Asn-134, Tyr-139, and Asp-142.

It belongs to the UMP kinase family. Homohexamer.

It is found in the cytoplasm. It carries out the reaction UMP + ATP = UDP + ADP. Its pathway is pyrimidine metabolism; CTP biosynthesis via de novo pathway; UDP from UMP (UMPK route): step 1/1. Inhibited by UTP. Catalyzes the reversible phosphorylation of UMP to UDP. This Pyrobaculum aerophilum (strain ATCC 51768 / DSM 7523 / JCM 9630 / CIP 104966 / NBRC 100827 / IM2) protein is Uridylate kinase.